The following is a 610-amino-acid chain: WD repeat-containing protein 46 (610 aa).

Residues 1–103 (METAPKPGKD…TQDPFPGPAP (103 aa)) form a disordered region. Residues 7–19 (PGKDVPPKKDKLQ) are compositionally biased toward basic and acidic residues. A Phosphoserine modification is found at Ser-41. The span at 65-77 (KKSRISKKPQVPK) shows a compositional bias: basic residues. 6 WD repeats span residues 193-234 (LRQF…CEIN), 235-272 (VMEAVRDIRFLHSEALLAVAQNRWLHIYDNQGIELHCI), 274-312 (RCDRVTRLEFLPFHFLLATASETGFLTYLDVSVGKIVAA), 315-354 (ARAGRLDVMSQNPYNAVIHLGHSNGTVSLWSPAMKEPLAK), 357-396 (CHRGGVRAVAVDSTGTYMATSGLDHQLKIFDLRGTYQPLS), and 399-436 (TLPHGAGHLAFSQRGLLVAGMGDVVNIWAGQGKASPPS). A disordered region spans residues 538–610 (ERLGYDPQAK…RPSALDRFVR (73 aa)). Basic and acidic residues predominate over residues 572–582 (VMDEEHRDKVR).

Part of the small subunit (SSU) processome, composed of more than 70 proteins and the RNA chaperone small nucleolar RNA (snoRNA) U3. Interacts with DDX21, NCL, NOP2 and EBNA1BP2.

It localises to the nucleus. The protein resides in the nucleolus. Its function is as follows. Scaffold component of the nucleolar structure. Required for localization of DDX21 and NCL to the granular compartment of the nucleolus. Part of the small subunit (SSU) processome, first precursor of the small eukaryotic ribosomal subunit. During the assembly of the SSU processome in the nucleolus, many ribosome biogenesis factors, an RNA chaperone and ribosomal proteins associate with the nascent pre-rRNA and work in concert to generate RNA folding, modifications, rearrangements and cleavage as well as targeted degradation of pre-ribosomal RNA by the RNA exosome. In Homo sapiens (Human), this protein is WD repeat-containing protein 46 (WDR46).